Reading from the N-terminus, the 252-residue chain is Trans-aconitate 2-methyltransferase (252 aa).

Belongs to the methyltransferase superfamily. Tam family.

The protein resides in the cytoplasm. It catalyses the reaction trans-aconitate + S-adenosyl-L-methionine = (E)-3-(methoxycarbonyl)pent-2-enedioate + S-adenosyl-L-homocysteine. Catalyzes the S-adenosylmethionine monomethyl esterification of trans-aconitate. The chain is Trans-aconitate 2-methyltransferase from Escherichia coli O17:K52:H18 (strain UMN026 / ExPEC).